A 334-amino-acid chain; its full sequence is S-adenosylmethionine decarboxylase proenzyme (334 aa).

Position 7 (F7) interacts with substrate. Residues E8 and E11 contribute to the active site. E67 is a substrate binding site. S68 acts as the Schiff-base intermediate with substrate; via pyruvic acid in catalysis. S68 bears the Pyruvic acid (Ser); by autocatalysis mark. Catalysis depends on C82, which acts as the Proton donor; for catalytic activity. F223 is a substrate binding site. Catalysis depends on proton acceptor; for processing activity residues S229 and H243. E247 is a binding site for substrate. At S298 the chain carries Phosphoserine.

The protein belongs to the eukaryotic AdoMetDC family. In terms of assembly, heterotetramer of two alpha and two beta chains. Pyruvate serves as cofactor. Is synthesized initially as an inactive proenzyme. Formation of the active enzyme involves a self-maturation process in which the active site pyruvoyl group is generated from an internal serine residue via an autocatalytic post-translational modification. Two non-identical subunits are generated from the proenzyme in this reaction, and the pyruvate is formed at the N-terminus of the alpha chain, which is derived from the carboxyl end of the proenzyme. The post-translation cleavage follows an unusual pathway, termed non-hydrolytic serinolysis, in which the side chain hydroxyl group of the serine supplies its oxygen atom to form the C-terminus of the beta chain, while the remainder of the serine residue undergoes an oxidative deamination to produce ammonia and the pyruvoyl group blocking the N-terminus of the alpha chain.

It catalyses the reaction S-adenosyl-L-methionine + H(+) = S-adenosyl 3-(methylsulfanyl)propylamine + CO2. Its pathway is amine and polyamine biosynthesis; S-adenosylmethioninamine biosynthesis; S-adenosylmethioninamine from S-adenosyl-L-methionine: step 1/1. Essential for biosynthesis of the polyamines spermidine and spermine. Promotes maintenance and self-renewal of embryonic stem cells, by maintaining spermine levels. The protein is S-adenosylmethionine decarboxylase proenzyme (AMD1) of Mesocricetus auratus (Golden hamster).